Reading from the N-terminus, the 485-residue chain is WD repeat-containing protein 13 (485 aa).

Position 1 is an N-acetylmethionine (Met1). Ser70, Ser74, and Ser79 each carry phosphoserine. Arg114 is modified (asymmetric dimethylarginine; alternate). Arg114 is subject to Omega-N-methylarginine; alternate. WD repeat units follow at residues 162–202 (GMYH…LCQL), 208–246 (TVLR…IWAS), 250–290 (RCIR…VMNI), 295–335 (KVKG…LFDM), 341–389 (TKAK…VVDN), 394–438 (QLKR…FFDV), and 444–482 (AAVN…VWRR).

As to expression, widely expressed.

It is found in the nucleus. The protein is WD repeat-containing protein 13 (WDR13) of Homo sapiens (Human).